The primary structure comprises 801 residues: Lon protease 2 (801 aa).

The Lon N-terminal domain occupies 14-209 (LPMLPVRDIV…LVNEILAAEL (196 aa)). 361–368 (GPPGVGKT) provides a ligand contact to ATP. The Lon proteolytic domain occupies 597-778 (DSQVGVVQGL…DEVFAVAFDK (182 aa)). Active-site residues include serine 684 and lysine 727. Residues 780 to 791 (AKGQEKKPAAKK) show a composition bias toward basic and acidic residues. Positions 780–801 (AKGQEKKPAAKKDPKKTKSLAA) are disordered. Basic residues predominate over residues 792-801 (DPKKTKSLAA).

The protein belongs to the peptidase S16 family. Homohexamer. Organized in a ring with a central cavity.

The protein localises to the cytoplasm. The catalysed reaction is Hydrolysis of proteins in presence of ATP.. Its function is as follows. ATP-dependent serine protease that mediates the selective degradation of mutant and abnormal proteins as well as certain short-lived regulatory proteins. Required for cellular homeostasis and for survival from DNA damage and developmental changes induced by stress. Degrades polypeptides processively to yield small peptide fragments that are 5 to 10 amino acids long. Binds to DNA in a double-stranded, site-specific manner. The polypeptide is Lon protease 2 (Bdellovibrio bacteriovorus (strain ATCC 15356 / DSM 50701 / NCIMB 9529 / HD100)).